We begin with the raw amino-acid sequence, 317 residues long: Putative carboxypeptidase RP402 (317 aa).

The active-site Nucleophile is Ser125. Active-site charge relay system residues include Glu225 and His288.

It belongs to the peptidase S66 family.

The polypeptide is Putative carboxypeptidase RP402 (Rickettsia prowazekii (strain Madrid E)).